We begin with the raw amino-acid sequence, 190 residues long: dCTP deaminase, dUMP-forming (190 aa).

Residues 101–106 (KSSLGR), aspartate 119, 127–129 (TLE), glutamine 148, tyrosine 162, and glutamine 174 each bind dCTP. Glutamate 129 (proton donor/acceptor) is an active-site residue. A disordered region spans residues 163-190 (GSTRVGSKYQGQRGPTPSRSYQNFITST). Polar residues predominate over residues 171 to 190 (YQGQRGPTPSRSYQNFITST).

It belongs to the dCTP deaminase family. Homotrimer.

It carries out the reaction dCTP + 2 H2O = dUMP + NH4(+) + diphosphate. Its pathway is pyrimidine metabolism; dUMP biosynthesis; dUMP from dCTP: step 1/1. Bifunctional enzyme that catalyzes both the deamination of dCTP to dUTP and the hydrolysis of dUTP to dUMP without releasing the toxic dUTP intermediate. This is dCTP deaminase, dUMP-forming from Mycobacterium avium (strain 104).